We begin with the raw amino-acid sequence, 368 residues long: Agmatine deiminase (368 aa).

Cys-357 functions as the Amidino-cysteine intermediate in the catalytic mechanism.

It belongs to the agmatine deiminase family. As to quaternary structure, homodimer.

The catalysed reaction is agmatine + H2O = N-carbamoylputrescine + NH4(+). It functions in the pathway amine and polyamine biosynthesis; putrescine biosynthesis via agmatine pathway; N-carbamoylputrescine from agmatine: step 1/1. Mediates the hydrolysis of agmatine into N-carbamoylputrescine in the arginine decarboxylase (ADC) pathway of putrescine biosynthesis, a basic polyamine. The protein is Agmatine deiminase of Ectopseudomonas mendocina (strain ymp) (Pseudomonas mendocina).